We begin with the raw amino-acid sequence, 268 residues long: Indole-3-glycerol phosphate synthase (268 aa).

It belongs to the TrpC family.

The enzyme catalyses 1-(2-carboxyphenylamino)-1-deoxy-D-ribulose 5-phosphate + H(+) = (1S,2R)-1-C-(indol-3-yl)glycerol 3-phosphate + CO2 + H2O. Its pathway is amino-acid biosynthesis; L-tryptophan biosynthesis; L-tryptophan from chorismate: step 4/5. The sequence is that of Indole-3-glycerol phosphate synthase from Acinetobacter baumannii (strain ACICU).